We begin with the raw amino-acid sequence, 32 residues long: Zinc metalloproteinase/disintegrin-like CdtV1 (32 aa).

Disulfide bonds link Cys-5–Cys-14 and Cys-7–Cys-15.

Belongs to the venom metalloproteinase (M12B) family. P-II subfamily. P-IIa sub-subfamily. As to quaternary structure, monomer. In terms of tissue distribution, expressed by the venom gland.

It localises to the secreted. Functionally, snake venom metalloproteinase that impairs hemostasis in the envenomed animal. The polypeptide is Zinc metalloproteinase/disintegrin-like CdtV1 (Crotalus durissus terrificus (South American rattlesnake)).